The primary structure comprises 318 residues: 2,4-dinitroanisole O-demethylase subunit beta (318 aa).

Belongs to the metallo-beta-lactamase superfamily. As to quaternary structure, part of the complex DnhAB composed of the 2,4-dinitroanisole O-demethylase alpha (DnhA) and beta (DnhB) subunits.

It catalyses the reaction 2,4-dinitroanisole + H2O = 2,4-dinitrophenol + methanol + H(+). In terms of biological role, involved in the degradation of 2,4-dinitroanisole (DNAN), an insensitive munition ingredient used in explosive formulations as a replacement for 2,4,6-trinitrotoluene (TNT). Catalyzes the removal of the methyl group from 2,4-dinitroanisole (DNAN) to yield 2,4-dinitrophenol (2,4-DNP) and methanol. The chain is 2,4-dinitroanisole O-demethylase subunit beta from Nocardioides sp. (strain JS1661).